The following is a 135-amino-acid chain: Ribonuclease P protein component (135 aa).

The protein belongs to the RnpA family. In terms of assembly, consists of a catalytic RNA component (M1 or rnpB) and a protein subunit.

The enzyme catalyses Endonucleolytic cleavage of RNA, removing 5'-extranucleotides from tRNA precursor.. In terms of biological role, RNaseP catalyzes the removal of the 5'-leader sequence from pre-tRNA to produce the mature 5'-terminus. It can also cleave other RNA substrates such as 4.5S RNA. The protein component plays an auxiliary but essential role in vivo by binding to the 5'-leader sequence and broadening the substrate specificity of the ribozyme. This is Ribonuclease P protein component from Pseudomonas aeruginosa (strain LESB58).